Here is a 182-residue protein sequence, read N- to C-terminus: MEQFHGTTILSVRRGNQVVIGGDGQVTLGNTVMKGNARKVRRLYKDKVIAGFAGGTADAFTLFERFEAKLEMHQGHLIRAAVELAKDWRTDRILRRLEAVLAVADSKASLIITGNGDVIEPEESLIAIGSGGPFAQAAARALMENTQLSAKEIVQKALTIAGDICIYTNNNLTIEELNDEGK.

Residue Thr-7 is part of the active site. 3 residues coordinate Na(+): Gly-162, Cys-165, and Thr-168.

The protein belongs to the peptidase T1B family. HslV subfamily. In terms of assembly, a double ring-shaped homohexamer of HslV is capped on each side by a ring-shaped HslU homohexamer. The assembly of the HslU/HslV complex is dependent on binding of ATP.

The protein resides in the cytoplasm. The catalysed reaction is ATP-dependent cleavage of peptide bonds with broad specificity.. With respect to regulation, allosterically activated by HslU binding. Its function is as follows. Protease subunit of a proteasome-like degradation complex believed to be a general protein degrading machinery. The sequence is that of ATP-dependent protease subunit HslV from Legionella pneumophila subsp. pneumophila (strain Philadelphia 1 / ATCC 33152 / DSM 7513).